Consider the following 957-residue polypeptide: Glycine dehydrogenase (decarboxylating) 2 (957 aa).

An N6-(pyridoxal phosphate)lysine modification is found at Lys-707.

The protein belongs to the GcvP family. As to quaternary structure, the glycine cleavage system is composed of four proteins: P, T, L and H. Pyridoxal 5'-phosphate is required as a cofactor.

It carries out the reaction N(6)-[(R)-lipoyl]-L-lysyl-[glycine-cleavage complex H protein] + glycine + H(+) = N(6)-[(R)-S(8)-aminomethyldihydrolipoyl]-L-lysyl-[glycine-cleavage complex H protein] + CO2. Functionally, the glycine cleavage system catalyzes the degradation of glycine. The P protein binds the alpha-amino group of glycine through its pyridoxal phosphate cofactor; CO(2) is released and the remaining methylamine moiety is then transferred to the lipoamide cofactor of the H protein. The sequence is that of Glycine dehydrogenase (decarboxylating) 2 from Pseudomonas fluorescens (strain ATCC BAA-477 / NRRL B-23932 / Pf-5).